Consider the following 230-residue polypeptide: 7-cyano-7-deazaguanine synthase (230 aa).

8-18 (LSGGMDSAVVT) contributes to the ATP binding site. Zn(2+) contacts are provided by Cys-186, Cys-196, Cys-199, and Cys-202.

The protein belongs to the QueC family. Zn(2+) serves as cofactor.

It carries out the reaction 7-carboxy-7-deazaguanine + NH4(+) + ATP = 7-cyano-7-deazaguanine + ADP + phosphate + H2O + H(+). The protein operates within purine metabolism; 7-cyano-7-deazaguanine biosynthesis. Its function is as follows. Catalyzes the ATP-dependent conversion of 7-carboxy-7-deazaguanine (CDG) to 7-cyano-7-deazaguanine (preQ(0)). The polypeptide is 7-cyano-7-deazaguanine synthase (Xylella fastidiosa (strain 9a5c)).